Here is a 550-residue protein sequence, read N- to C-terminus: CTP synthase (550 aa).

An amidoligase domain region spans residues 1 to 270; sequence MTKFVFVTGG…DRLICEELRL (270 aa). S13 is a CTP binding site. S13 is a UTP binding site. Residues 14–19 and D71 contribute to the ATP site; that span reads SLGKGI. Mg(2+)-binding residues include D71 and E144. Residues 151–153, 191–196, and K227 each bind CTP; these read DIE and KTKPTQ. UTP contacts are provided by residues 191 to 196 and K227; that span reads KTKPTQ. The 253-residue stretch at 295 to 547 folds into the Glutamine amidotransferase type-1 domain; the sequence is TIGMVGKYVD…VEAALASQQR (253 aa). An L-glutamine-binding site is contributed by G356. C383 (nucleophile; for glutamine hydrolysis) is an active-site residue. Residues 384–387, E407, and R473 contribute to the L-glutamine site; that span reads LGMQ. Catalysis depends on residues H520 and E522.

The protein belongs to the CTP synthase family. In terms of assembly, homotetramer.

The catalysed reaction is UTP + L-glutamine + ATP + H2O = CTP + L-glutamate + ADP + phosphate + 2 H(+). It catalyses the reaction L-glutamine + H2O = L-glutamate + NH4(+). The enzyme catalyses UTP + NH4(+) + ATP = CTP + ADP + phosphate + 2 H(+). It functions in the pathway pyrimidine metabolism; CTP biosynthesis via de novo pathway; CTP from UDP: step 2/2. Its activity is regulated as follows. Allosterically activated by GTP, when glutamine is the substrate; GTP has no effect on the reaction when ammonia is the substrate. The allosteric effector GTP functions by stabilizing the protein conformation that binds the tetrahedral intermediate(s) formed during glutamine hydrolysis. Inhibited by the product CTP, via allosteric rather than competitive inhibition. Functionally, catalyzes the ATP-dependent amination of UTP to CTP with either L-glutamine or ammonia as the source of nitrogen. Regulates intracellular CTP levels through interactions with the four ribonucleotide triphosphates. In Cupriavidus necator (strain ATCC 17699 / DSM 428 / KCTC 22496 / NCIMB 10442 / H16 / Stanier 337) (Ralstonia eutropha), this protein is CTP synthase.